The chain runs to 155 residues: Ribonuclease H (155 aa).

Positions 1–142 (MLKQVEIFTD…CDELARAAAM (142 aa)) constitute an RNase H type-1 domain. Mg(2+) is bound by residues D10, E48, D70, and D134.

It belongs to the RNase H family. As to quaternary structure, monomer. Mg(2+) is required as a cofactor.

The protein localises to the cytoplasm. The enzyme catalyses Endonucleolytic cleavage to 5'-phosphomonoester.. Functionally, endonuclease that specifically degrades the RNA of RNA-DNA hybrids. This Escherichia fergusonii (strain ATCC 35469 / DSM 13698 / CCUG 18766 / IAM 14443 / JCM 21226 / LMG 7866 / NBRC 102419 / NCTC 12128 / CDC 0568-73) protein is Ribonuclease H.